A 309-amino-acid chain; its full sequence is Probable manganese-dependent inorganic pyrophosphatase (309 aa).

Mn(2+)-binding residues include His-9, Asp-13, Asp-15, Asp-75, His-97, and Asp-149.

This sequence belongs to the PPase class C family. It depends on Mn(2+) as a cofactor.

It localises to the cytoplasm. It catalyses the reaction diphosphate + H2O = 2 phosphate + H(+). In Bacillus cereus (strain B4264), this protein is Probable manganese-dependent inorganic pyrophosphatase.